A 588-amino-acid chain; its full sequence is Transmembrane protein 201 homolog (588 aa).

Residues 1–212 (MEVAAAVGVI…FFFAGGSTCE (212 aa)) are Nuclear-facing. The helical transmembrane segment at 213–233 (ALHFGCLISSIILFLANIDFL) threads the bilayer. At 234–254 (QQDAGASLINLPKALQDILPE) the chain is on the perinuclear space side. Residues 255–275 (VYKYSFVINFLIFTTHLIAAF) traverse the membrane as a helical segment. Topologically, residues 276–280 (NNKCR) are nuclear. Residues 281–301 (VTLPDLLLPILLILAMLTVLT) form a helical membrane-spanning segment. Over 302 to 309 (SSDNLSQD) the chain is Perinuclear space. Residues 310–330 (VALVRGACASFSTILSMAVTL) form a helical membrane-spanning segment. The Nuclear portion of the chain corresponds to 331-564 (LPRKKLHKKR…SGAWQCRVIG (234 aa)). Residues 378–457 (RRSPHTPSAS…QSTRSSHFKP (80 aa)) are disordered. Residues 384–396 (PSASPPAMNSSPP) show a composition bias toward low complexity. 2 stretches are compositionally biased toward polar residues: residues 418-430 (NMQSYQTKPNNHV) and 441-452 (MAAQSVAQSTRS). A helical transmembrane segment spans residues 565 to 585 (ILFALVFIVLIMQIGLFYVLF). The Perinuclear space segment spans residues 586 to 588 (TRN).

It belongs to the TMEM201 family.

It localises to the nucleus inner membrane. Plays a role in nuclear migration in hypodermal cells. This chain is Transmembrane protein 201 homolog, found in Caenorhabditis elegans.